Consider the following 182-residue polypeptide: dCTP deaminase, dUMP-forming (182 aa).

DCTP is bound by residues 96–101 (RSSIGR), Asp113, 121–123 (TLE), Gln142, Tyr156, and Gln163. Catalysis depends on Glu123, which acts as the Proton donor/acceptor.

The protein belongs to the dCTP deaminase family. Homotrimer.

It catalyses the reaction dCTP + 2 H2O = dUMP + NH4(+) + diphosphate. It participates in pyrimidine metabolism; dUMP biosynthesis; dUMP from dCTP: step 1/1. Functionally, bifunctional enzyme that catalyzes both the deamination of dCTP to dUTP and the hydrolysis of dUTP to dUMP without releasing the toxic dUTP intermediate. This is dCTP deaminase, dUMP-forming from Halothermothrix orenii (strain H 168 / OCM 544 / DSM 9562).